Here is a 265-residue protein sequence, read N- to C-terminus: Protein N-terminal and lysine N-methyltransferase EFM7 (265 aa).

S-adenosyl-L-methionine is bound by residues tryptophan 55, 81 to 83, aspartate 103, tryptophan 141, and alanine 169; that span reads GAA.

The protein belongs to the class I-like SAM-binding methyltransferase superfamily. EFM7 family.

It localises to the cytoplasm. Its function is as follows. S-adenosyl-L-methionine-dependent protein methyltransferase that trimethylates the N-terminal glycine 'Gly-2' of elongation factor 1-alpha, before also catalyzing the mono- and dimethylation of 'Lys-3'. This chain is Protein N-terminal and lysine N-methyltransferase EFM7, found in Gibberella zeae (strain ATCC MYA-4620 / CBS 123657 / FGSC 9075 / NRRL 31084 / PH-1) (Wheat head blight fungus).